The following is a 227-amino-acid chain: Ribosomal RNA large subunit methyltransferase E (227 aa).

Positions 78, 80, 103, 119, and 143 each coordinate S-adenosyl-L-methionine. Catalysis depends on lysine 183, which acts as the Proton acceptor.

Belongs to the class I-like SAM-binding methyltransferase superfamily. RNA methyltransferase RlmE family.

Its subcellular location is the cytoplasm. The catalysed reaction is uridine(2552) in 23S rRNA + S-adenosyl-L-methionine = 2'-O-methyluridine(2552) in 23S rRNA + S-adenosyl-L-homocysteine + H(+). Its function is as follows. Specifically methylates the uridine in position 2552 of 23S rRNA at the 2'-O position of the ribose in the fully assembled 50S ribosomal subunit. This is Ribosomal RNA large subunit methyltransferase E from Rickettsia bellii (strain RML369-C).